A 465-amino-acid chain; its full sequence is VGFKAGVKDYKLTYYTPDYETKDTDILAAFRVTPQPGVPPEEAGAAVAAESSTGTWTTVWTDGLTSLDRYKGRCYHIEPVPGEESQFIAYVAYPLDLFEEGSVTNMFTSIVGNVFGFKALRALRLEDLRIPTAYVKTFQGPPHGIQVERDKLNKYGRPLLGCTIKPKLGLSAKNYGRAVYECLRGGLDFTKDDENVNSQPFMRWRDRFLFCAEAIYKSQAETGEIKGHYLNATAGTCEDMMKRAVFARELGVPIVMHDYLTGGFTANTTLAHYCRDNGLLLHIHRAMHAVIDRQKNHGMHFRVLAKALRMSGGDHIHAGTVVGKLEGEREITLGFVDLLRDDFIEKDRSRGIYFTQDWVSLPGVLPVASGGIHVWHMPALTEIFGDDSVLQFGGGTLGHPWGNAPGAVANRVALEACVQARNEGRDLAREGNDIIREACKWSPELAAACEVWKEIKFEFEAMDTL.

Lys-4 bears the N6,N6,N6-trimethyllysine mark. Substrate is bound by residues Asn-113 and Thr-163. Lys-165 acts as the Proton acceptor in catalysis. Lys-167 serves as a coordination point for substrate. Mg(2+)-binding residues include Lys-191, Asp-193, and Glu-194. Lys-191 is modified (N6-carboxylysine). His-284 acts as the Proton acceptor in catalysis. Substrate is bound by residues Arg-285, His-317, and Ser-369.

This sequence belongs to the RuBisCO large chain family. Type I subfamily. As to quaternary structure, heterohexadecamer of 8 large chains and 8 small chains; disulfide-linked. The disulfide link is formed within the large subunit homodimers. The cofactor is Mg(2+). Post-translationally, the disulfide bond which can form in the large chain dimeric partners within the hexadecamer appears to be associated with oxidative stress and protein turnover.

Its subcellular location is the plastid. It is found in the chloroplast. It carries out the reaction 2 (2R)-3-phosphoglycerate + 2 H(+) = D-ribulose 1,5-bisphosphate + CO2 + H2O. The catalysed reaction is D-ribulose 1,5-bisphosphate + O2 = 2-phosphoglycolate + (2R)-3-phosphoglycerate + 2 H(+). In terms of biological role, ruBisCO catalyzes two reactions: the carboxylation of D-ribulose 1,5-bisphosphate, the primary event in carbon dioxide fixation, as well as the oxidative fragmentation of the pentose substrate in the photorespiration process. Both reactions occur simultaneously and in competition at the same active site. The protein is Ribulose bisphosphate carboxylase large chain of Fragaria ananassa (Strawberry).